Consider the following 2395-residue polypeptide: Helicase ssl-1 (2395 aa).

Residues 1 to 12 (MPATPVRASSTR) show a composition bias toward low complexity. A disordered region spans residues 1-62 (MPATPVRASS…EKKKKKTSDD (62 aa)). An HSA domain is found at 227 to 300 (LPKCVEPERN…IKEKRKMCAG (74 aa)). Residues 354–363 (LVSSSKSPSI) are compositionally biased toward polar residues. Disordered regions lie at residues 354–404 (LVSS…VRQE) and 444–504 (EKLE…HGVL). Basic and acidic residues-rich tracts occupy residues 365–375 (SDRDDKDEEFK), 394–404 (KSQKKEDVRQE), and 444–462 (EKLE…NEEK). A coiled-coil region spans residues 388-464 (TIANAEKSQK…ACGDNEEKME (77 aa)). Over residues 470–490 (SSDAQKPSTSSSDLTAEQLQD) the composition is skewed to polar residues. A Helicase ATP-binding domain is found at 570-735 (VTLYEKNLNG…WSLMHFLMPT (166 aa)). 583-590 (DEMGLGKT) is a binding site for ATP. The tract at residues 963 to 982 (AQPLQNGNSIPQNAPNRPQT) is disordered. The region spanning 1196–1342 (LLRQLYLYKH…ELAIDEAGFT (147 aa)) is the Helicase C-terminal domain. Residues 1452–1476 (KPEFEEECKEAEALIDQKREEWDKN) are a coiled coil. Disordered stretches follow at residues 1615-1706 (ESAA…EEPD), 1977-2073 (SIQH…RRNA), 2092-2143 (QSGK…PQQR), 2276-2306 (QMRS…RPLV), and 2350-2395 (MQMP…PPQN). Composition is skewed to low complexity over residues 1647–1669 (QQPT…QQQQ) and 1981–1995 (LQSS…QNLQ). Over residues 1996–2019 (NSHNSEQRNNVQNMHQNQYNSSQN) the composition is skewed to polar residues. 2 stretches are compositionally biased toward low complexity: residues 2051-2073 (LVQQ…RRNA) and 2092-2114 (QSGK…SSND). Gly residues predominate over residues 2115–2129 (GQGGASTVGGGGGGS). Residues 2130 to 2142 (QQPHQQQQQQPQQ) show a composition bias toward low complexity. Residues 2281-2299 (NGGGVGGQGGLQGGPGGPQ) show a composition bias toward gly residues. A compositionally biased stretch (low complexity) spans 2361–2377 (QQQAPPQSSQQASQQAP).

This sequence belongs to the SNF2/RAD54 helicase family. SWR1 subfamily.

The protein resides in the nucleus. Probable catalytic component of a chromatin-remodeling complex which mediates the ATP-dependent exchange of histone H2A variant H2AV/htz-1 for H2A, leading to transcriptional regulation of selected genes by chromatin remodeling. Involved in foregut development, and may be involved in vulval development. The protein is Helicase ssl-1 (ssl-1) of Caenorhabditis elegans.